Here is a 956-residue protein sequence, read N- to C-terminus: Netrin receptor UNC5D (956 aa).

Residues 1-30 (MGTGAADRSRGARWWLPWLGLCFWAAGAEA) form the signal peptide. The Extracellular portion of the chain corresponds to 31–382 (ARGADSGEVL…SRRGIENASD (352 aa)). The region spanning 52–149 (PHFIEEPEDA…LGTSKSRKAS (98 aa)) is the Ig-like domain. 9 disulfide bridges follow: C73-C134, C85-C132, C178-C229, C262-C299, C266-C303, C277-C289, C318-C352, C322-C357, and C330-C342. The segment at 89–91 (WVH) is important for interaction with FLRT2. Residues N115 and N226 are each glycosylated (N-linked (GlcNAc...) asparagine). The Ig-like C2-type domain maps to 164–242 (QGREVPIEGM…NIVAKRRSLS (79 aa)). TSP type-1 domains lie at 250–304 (NGGW…ALCP) and 306–358 (DGSW…GLCI). The chain crosses the membrane as a helical span at residues 383–403 (IALYSGLGAAVVAVAVLVIGV). Topologically, residues 404–956 (TLYRRSHSDY…DFNYSRQNGL (553 aa)) are cytoplasmic. Residues 545 to 685 (LRTTGVFGHL…FGTYALTGEP (141 aa)) form the ZU5 domain. The 78-residue stretch at 862-939 (QRICATFDTP…RTHTKLSNIT (78 aa)) folds into the Death domain.

This sequence belongs to the unc-5 family. As to quaternary structure, interacts (via extracellular domain) with FLRT2 and FLRT3 (via extracellular domain); the interaction is direct. Has higher affinity for FLRT2. Identified in a complex with FLRT3 and ADGRL3; does not interact with ADGRL3 by itself. Post-translationally, proteolytically cleaved by caspases during apoptosis. The cleavage does not take place when the receptor is associated with netrin ligand. Its cleavage by caspases is required to induce apoptosis.

The protein localises to the cell membrane. Receptor for the netrin NTN4 that promotes neuronal cell survival. Plays a role in cell-cell adhesion and cell guidance. Receptor for netrin involved in cell migration. Plays a role in axon guidance by mediating axon repulsion of neuronal growth cones in the developing nervous system upon ligand binding. May play a role in apoptosis in response to DNA damage. It also acts as a dependence receptor required for apoptosis induction when not associated with netrin ligand. Mediates cell-cell adhesion via its interaction with FLRT3 on an adjacent cell. In Rattus norvegicus (Rat), this protein is Netrin receptor UNC5D.